The following is a 390-amino-acid chain: LL-diaminopimelate aminotransferase (390 aa).

The substrate site is built by Tyr13, Gly38, Lys102, Tyr126, and Asn176. Residues 101–102 (SK), Tyr126, Asn176, Tyr207, and 235–237 (SVS) contribute to the pyridoxal 5'-phosphate site. At Lys238 the chain carries N6-(pyridoxal phosphate)lysine. Arg246 provides a ligand contact to pyridoxal 5'-phosphate. Arg364 serves as a coordination point for substrate.

Belongs to the class-I pyridoxal-phosphate-dependent aminotransferase family. LL-diaminopimelate aminotransferase subfamily. In terms of assembly, homodimer. It depends on pyridoxal 5'-phosphate as a cofactor.

It carries out the reaction (2S,6S)-2,6-diaminopimelate + 2-oxoglutarate = (S)-2,3,4,5-tetrahydrodipicolinate + L-glutamate + H2O + H(+). It functions in the pathway amino-acid biosynthesis; L-lysine biosynthesis via DAP pathway; LL-2,6-diaminopimelate from (S)-tetrahydrodipicolinate (aminotransferase route): step 1/1. In terms of biological role, involved in the synthesis of meso-diaminopimelate (m-DAP or DL-DAP), required for both lysine and peptidoglycan biosynthesis. Catalyzes the direct conversion of tetrahydrodipicolinate to LL-diaminopimelate. Is also able to catalyze the reverse reaction in vitro, i.e. the transamination of LL-diaminopimelate with 2-oxoglutarate to produce tetrahydrodipicolinate and glutamate. Can also use m-DAP instead of LL-DAP as the amino-group donor, and oxaloacetate instead of 2-oxoglutarate as the amino-group acceptor. The protein is LL-diaminopimelate aminotransferase of Moorella thermoacetica (strain ATCC 39073 / JCM 9320).